A 256-amino-acid chain; its full sequence is Pro-thyrotropin-releasing hormone (256 aa).

A signal peptide spans 1-24 (MQGPWLMMALALIFVLTGIPKSCA). Disordered stretches follow at residues 76 to 128 (RQHP…EGDS) and 151 to 215 (VKRQ…HPCG). Proline amide is present on residues P79, P111, P156, and P174. Over residues 104-113 (RPHKRQHPGR) the composition is skewed to basic residues. The segment covering 177–188 (RFIDPELQRSWE) has biased composition (basic and acidic residues). P205 carries the proline amide modification.

Belongs to the TRH family. Specifically expressed in hypothalamus and testis.

The protein resides in the secreted. In terms of biological role, functions as a regulator of the biosynthesis of TSH in the anterior pituitary gland and as a neurotransmitter/ neuromodulator in the central and peripheral nervous systems. This is Pro-thyrotropin-releasing hormone (Trh) from Mus musculus (Mouse).